Consider the following 94-residue polypeptide: Acylphosphatase (94 aa).

The 87-residue stretch at 8-94 folds into the Acylphosphatase-like domain; the sequence is TLFIIVHGKV…GRRFKHFAQH (87 aa). Residues Arg23 and Asn41 contribute to the active site. Residues 69 to 94 are disordered; that stretch reads PPAASVTELESRREDGGRRFKHFAQH. Positions 77-86 are enriched in basic and acidic residues; that stretch reads LESRREDGGR.

It belongs to the acylphosphatase family.

The enzyme catalyses an acyl phosphate + H2O = a carboxylate + phosphate + H(+). The polypeptide is Acylphosphatase (acyP) (Bordetella avium (strain 197N)).